Consider the following 689-residue polypeptide: Small ribosomal subunit protein mS39 (689 aa).

The N-terminal 37 residues, Met1–Tyr37, are a transit peptide targeting the mitochondrion. N6-acetyllysine is present on Lys126. PPR repeat units lie at residues Ile149–Val183, Ser184–Glu219, Asn255–Ala289, Asp290–Pro330, Asn331–Pro367, Ser368–Asp409, Asp412–Lys446, Arg454–Pro488, His489–Phe523, and Pro572–Pro606. A disordered region spans residues Asn665–Lys689. A compositionally biased stretch (acidic residues) spans Ser673–Lys689.

This sequence belongs to the mitochondrion-specific ribosomal protein mS39 family. Component of the mitochondrial small ribosomal subunit (mt-SSU). Mature mammalian 55S mitochondrial ribosomes consist of a small (28S) and a large (39S) subunit. The 28S small subunit contains a 12S ribosomal RNA (12S mt-rRNA) and 30 different proteins. The 39S large subunit contains a 16S rRNA (16S mt-rRNA), a copy of mitochondrial valine transfer RNA (mt-tRNA(Val)), which plays an integral structural role, and 52 different proteins. Associated with the 12S mitochondrial rRNA (12S mt-rRNA). As to expression, abundant in testes, skeletal muscle and heart tissue.

It is found in the mitochondrion. Its function is as follows. Mitochondrial RNA-binding protein that has a role in mitochondrial translation. The chain is Small ribosomal subunit protein mS39 (PTCD3) from Homo sapiens (Human).